The following is a 263-amino-acid chain: MNVGFLGFGAMGRALAEGLVHAGALQAAQVYACALNQEKLRAQCTSLGIGACASVQELVQKSEWIFLAVKPSQISTVLRDRQSFQGKVLISLAAGMSCAAYEALFAADPHQGIRHLSLLPNLPCQVARGVIIAEARHTLHHDEHAALLAVLRTVAQVEVVDTAYFAIAGVIAGCAPAFAAQFIEALADAGVRYGLARDQAYRLAAHMLEGTAALIQHSGVHPAQLKDRVCSPAGSTIRGVLALEEQGLRRAVIHAVRAALSSS.

It belongs to the pyrroline-5-carboxylate reductase family.

It is found in the cytoplasm. The enzyme catalyses L-proline + NADP(+) = (S)-1-pyrroline-5-carboxylate + NADPH + 2 H(+). It catalyses the reaction L-proline + NAD(+) = (S)-1-pyrroline-5-carboxylate + NADH + 2 H(+). It participates in amino-acid biosynthesis; L-proline biosynthesis; L-proline from L-glutamate 5-semialdehyde: step 1/1. Its function is as follows. Catalyzes the reduction of 1-pyrroline-5-carboxylate (PCA) to L-proline. The chain is Pyrroline-5-carboxylate reductase from Treponema pallidum (strain Nichols).